Consider the following 253-residue polypeptide: Phosphate import ATP-binding protein PstB (253 aa).

Residues 7 to 249 (ASAKNLNLWY…PQSSKTKRYI (243 aa)) form the ABC transporter domain. ATP is bound at residue 39–46 (GPSGCGKS).

This sequence belongs to the ABC transporter superfamily. Phosphate importer (TC 3.A.1.7) family. The complex is composed of two ATP-binding proteins (PstB), two transmembrane proteins (PstC and PstA) and a solute-binding protein (PstS).

Its subcellular location is the cell inner membrane. It carries out the reaction phosphate(out) + ATP + H2O = ADP + 2 phosphate(in) + H(+). Its function is as follows. Part of the ABC transporter complex PstSACB involved in phosphate import. Responsible for energy coupling to the transport system. In Ehrlichia ruminantium (strain Gardel), this protein is Phosphate import ATP-binding protein PstB.